The primary structure comprises 61 residues: Small ribosomal subunit protein uS14 (61 aa).

Zn(2+) contacts are provided by C24, C27, C40, and C43.

The protein belongs to the universal ribosomal protein uS14 family. Zinc-binding uS14 subfamily. In terms of assembly, part of the 30S ribosomal subunit. Contacts proteins S3 and S10. The cofactor is Zn(2+).

Binds 16S rRNA, required for the assembly of 30S particles and may also be responsible for determining the conformation of the 16S rRNA at the A site. This Borreliella afzelii (strain PKo) (Borrelia afzelii) protein is Small ribosomal subunit protein uS14.